The sequence spans 871 residues: MKSSEIRQQFLDFFASKGHQIVSSSSLVPHEDPTLLFTNAGMNQFKDVFLGFDKRPYSRATTSQKCVRAGGKHNDLENVGYTARHHTFFEMLGNFSFGDYFKRDAIKYAWELLTEVYKLPKDKLTVTVYAEDDEAYDIWTKEIGVPVERVIRIGDNKGARYASDNFWMMGDTGPCGPCTEIFYDHGEKYWGGPPGSPEEDGDRFIEIWNNVFMQFNRDEAGVMHPLPKPSVDTGMGLERVSAVLQGVHANYEIDLFQALLKAAARETSDADLDSPSLKVLADHIRACSFLLADGVIPGNEGRGYVLRRIIRRAIRHGYKLGARAAFFHKMVPDLVAEMGMAYPELGQNQAKIVATLKQEEDRFFETIEHGMAILEGELKSLGEGGVFNGDTAFKLHDTYGFPLDLTQDICREHKITVDAAAFDAAMARQKEQARAAGKFKMATNLEYDGPATTFHGYAALEYKANVLALYKDGIAVNQLNEGEMGVVVLDDTPFYAESGGQVGDCGALQSVHGIFAVEDTQKIQATVFGHHGVVKTGTITVGNGVAAKVDVQARQRIMRNHSATHLLHKALREVLGDHVQQKGSQVDPDKTRFDFVHNQPMTDEEIRRVENIVNAEILANVATETRVLPIAEAQKLGAMMLFGEKYGDDVRVLDIGSSRELCGGTHVSRTGDIGLFSITAEGGVAAGVRRVEAVTGDNALAYMQDMESALGGVAGTLKVLPKDVHGRVLAVLDQVKKLERELAALKGKLASAQGDDMLSNAVDIKGAKVLAATLEGADVNALRETMDKLKDKLKSAAIVLASVADGKVTLIAGVTADLTGKVKAGELVNLVAQQIGGKGGGRPDMAQAGGTQPENLPAALASVAGWVEGKL.

Zn(2+) contacts are provided by histidine 561, histidine 565, cysteine 662, and histidine 666.

The protein belongs to the class-II aminoacyl-tRNA synthetase family. Zn(2+) is required as a cofactor.

Its subcellular location is the cytoplasm. The catalysed reaction is tRNA(Ala) + L-alanine + ATP = L-alanyl-tRNA(Ala) + AMP + diphosphate. Functionally, catalyzes the attachment of alanine to tRNA(Ala) in a two-step reaction: alanine is first activated by ATP to form Ala-AMP and then transferred to the acceptor end of tRNA(Ala). Also edits incorrectly charged Ser-tRNA(Ala) and Gly-tRNA(Ala) via its editing domain. This is Alanine--tRNA ligase from Dechloromonas aromatica (strain RCB).